Here is a 490-residue protein sequence, read N- to C-terminus: Protein nucleotidyltransferase YdiU (490 aa).

Glycine 89, glycine 91, arginine 92, lysine 112, aspartate 124, glycine 125, arginine 175, and arginine 182 together coordinate ATP. Residue aspartate 251 is the Proton acceptor of the active site. Residues asparagine 252 and aspartate 261 each coordinate Mg(2+). Aspartate 261 serves as a coordination point for ATP.

Belongs to the SELO family. The cofactor is Mg(2+). Mn(2+) is required as a cofactor.

It carries out the reaction L-seryl-[protein] + ATP = 3-O-(5'-adenylyl)-L-seryl-[protein] + diphosphate. It catalyses the reaction L-threonyl-[protein] + ATP = 3-O-(5'-adenylyl)-L-threonyl-[protein] + diphosphate. The catalysed reaction is L-tyrosyl-[protein] + ATP = O-(5'-adenylyl)-L-tyrosyl-[protein] + diphosphate. The enzyme catalyses L-histidyl-[protein] + UTP = N(tele)-(5'-uridylyl)-L-histidyl-[protein] + diphosphate. It carries out the reaction L-seryl-[protein] + UTP = O-(5'-uridylyl)-L-seryl-[protein] + diphosphate. It catalyses the reaction L-tyrosyl-[protein] + UTP = O-(5'-uridylyl)-L-tyrosyl-[protein] + diphosphate. Nucleotidyltransferase involved in the post-translational modification of proteins. It can catalyze the addition of adenosine monophosphate (AMP) or uridine monophosphate (UMP) to a protein, resulting in modifications known as AMPylation and UMPylation. This is Protein nucleotidyltransferase YdiU from Vibrio vulnificus (strain YJ016).